Consider the following 274-residue polypeptide: Nitrogenase iron protein (274 aa).

Gly-8–Ser-15 is a binding site for ATP. Cys-94 provides a ligand contact to [4Fe-4S] cluster. Position 97 is an ADP-ribosylarginine; by dinitrogenase reductase ADP-ribosyltransferase (Arg-97). Cys-131 lines the [4Fe-4S] cluster pocket.

This sequence belongs to the NifH/BchL/ChlL family. Homodimer. Requires [4Fe-4S] cluster as cofactor. The reversible ADP-ribosylation of Arg-97 inactivates the nitrogenase reductase and regulates nitrogenase activity.

It carries out the reaction N2 + 8 reduced [2Fe-2S]-[ferredoxin] + 16 ATP + 16 H2O = H2 + 8 oxidized [2Fe-2S]-[ferredoxin] + 2 NH4(+) + 16 ADP + 16 phosphate + 6 H(+). In terms of biological role, the key enzymatic reactions in nitrogen fixation are catalyzed by the nitrogenase complex, which has 2 components: the iron protein and the molybdenum-iron protein. In Chlorobium phaeovibrioides (strain DSM 265 / 1930) (Prosthecochloris vibrioformis (strain DSM 265)), this protein is Nitrogenase iron protein.